A 231-amino-acid chain; its full sequence is Large ribosomal subunit protein uL1 (231 aa).

It belongs to the universal ribosomal protein uL1 family. Part of the 50S ribosomal subunit.

Its function is as follows. Binds directly to 23S rRNA. The L1 stalk is quite mobile in the ribosome, and is involved in E site tRNA release. Protein L1 is also a translational repressor protein, it controls the translation of the L11 operon by binding to its mRNA. The polypeptide is Large ribosomal subunit protein uL1 (Pseudomonas fluorescens (strain ATCC BAA-477 / NRRL B-23932 / Pf-5)).